Here is a 459-residue protein sequence, read N- to C-terminus: Argininosuccinate lyase (459 aa).

The protein belongs to the lyase 1 family. Argininosuccinate lyase subfamily.

The protein resides in the cytoplasm. The enzyme catalyses 2-(N(omega)-L-arginino)succinate = fumarate + L-arginine. It functions in the pathway amino-acid biosynthesis; L-arginine biosynthesis; L-arginine from L-ornithine and carbamoyl phosphate: step 3/3. This chain is Argininosuccinate lyase, found in Staphylococcus aureus (strain MSSA476).